Reading from the N-terminus, the 611-residue chain is Dihydroxy-acid dehydratase (611 aa).

Asp-81 lines the Mg(2+) pocket. Cys-122 provides a ligand contact to [2Fe-2S] cluster. Asp-123 and Lys-124 together coordinate Mg(2+). Lys-124 bears the N6-carboxylysine mark. A [2Fe-2S] cluster-binding site is contributed by Cys-195. Glu-491 contacts Mg(2+). The active-site Proton acceptor is the Ser-517.

Belongs to the IlvD/Edd family. Homodimer. [2Fe-2S] cluster is required as a cofactor. Mg(2+) serves as cofactor.

It carries out the reaction (2R)-2,3-dihydroxy-3-methylbutanoate = 3-methyl-2-oxobutanoate + H2O. The enzyme catalyses (2R,3R)-2,3-dihydroxy-3-methylpentanoate = (S)-3-methyl-2-oxopentanoate + H2O. Its pathway is amino-acid biosynthesis; L-isoleucine biosynthesis; L-isoleucine from 2-oxobutanoate: step 3/4. It functions in the pathway amino-acid biosynthesis; L-valine biosynthesis; L-valine from pyruvate: step 3/4. In terms of biological role, functions in the biosynthesis of branched-chain amino acids. Catalyzes the dehydration of (2R,3R)-2,3-dihydroxy-3-methylpentanoate (2,3-dihydroxy-3-methylvalerate) into 2-oxo-3-methylpentanoate (2-oxo-3-methylvalerate) and of (2R)-2,3-dihydroxy-3-methylbutanoate (2,3-dihydroxyisovalerate) into 2-oxo-3-methylbutanoate (2-oxoisovalerate), the penultimate precursor to L-isoleucine and L-valine, respectively. In Histophilus somni (strain 2336) (Haemophilus somnus), this protein is Dihydroxy-acid dehydratase.